An 89-amino-acid chain; its full sequence is uncharacterized protein (89 aa).

This is an uncharacterized protein from Archaeoglobus fulgidus (strain ATCC 49558 / DSM 4304 / JCM 9628 / NBRC 100126 / VC-16).